We begin with the raw amino-acid sequence, 126 residues long: Large ribosomal subunit protein uL22 (126 aa).

It belongs to the universal ribosomal protein uL22 family. Part of the 50S ribosomal subunit.

This protein binds specifically to 23S rRNA; its binding is stimulated by other ribosomal proteins, e.g. L4, L17, and L20. It is important during the early stages of 50S assembly. It makes multiple contacts with different domains of the 23S rRNA in the assembled 50S subunit and ribosome. In terms of biological role, the globular domain of the protein is located near the polypeptide exit tunnel on the outside of the subunit, while an extended beta-hairpin is found that lines the wall of the exit tunnel in the center of the 70S ribosome. The protein is Large ribosomal subunit protein uL22 of Sphingopyxis alaskensis (strain DSM 13593 / LMG 18877 / RB2256) (Sphingomonas alaskensis).